The chain runs to 260 residues: uncharacterized protein (260 aa).

The stretch at 1 to 38 (MNWTREIEQYKQVVASYKLKMKRMEMKISDISEEKRQS) forms a coiled coil.

This is an uncharacterized protein from Caenorhabditis elegans.